A 451-amino-acid polypeptide reads, in one-letter code: uncharacterized protein (451 aa).

Disordered stretches follow at residues 89–150 (PRLS…ISRY) and 164–222 (QVGE…KTFG). Positions 104–121 (QKPTISRESFVWESSASI) are enriched in polar residues. The span at 137-147 (SSTPSIEPESI) shows a compositional bias: low complexity. Residues 175-222 (RAADSENERRPSEVREAPESRRRRETSETGSDKSKAPPPIKEIKKTFG) show a composition bias toward basic and acidic residues. A helical membrane pass occupies residues 358-376 (LIGLMLFQTTIFIISKIIA). Positions 401–451 (RNGSSSGFASGTSSPLVFIPRTKRPSLVPSEKKMRGPSVTRDLAAEQERDA) are disordered. Residues 403–414 (GSSSGFASGTSS) show a composition bias toward low complexity.

It belongs to the IIV-6 067R family.

Its subcellular location is the membrane. This is an uncharacterized protein from Invertebrate iridescent virus 3 (IIV-3).